The following is an 829-amino-acid chain: Leucine--tRNA ligase (829 aa).

Positions 42–52 match the 'HIGH' region motif; the sequence is PYPSGRIHMGH. Residues 584-588 carry the 'KMSKS' region motif; it reads KMSKS. Position 587 (K587) interacts with ATP.

This sequence belongs to the class-I aminoacyl-tRNA synthetase family.

Its subcellular location is the cytoplasm. The enzyme catalyses tRNA(Leu) + L-leucine + ATP = L-leucyl-tRNA(Leu) + AMP + diphosphate. This Syntrophobacter fumaroxidans (strain DSM 10017 / MPOB) protein is Leucine--tRNA ligase.